The primary structure comprises 478 residues: Signal recognition particle receptor FtsY (478 aa).

Composition is skewed to basic and acidic residues over residues 14–33 (KDKA…ERGN) and 45–56 (AEAHDAVDKDPV). Residues 14–94 (KDKAETEERP…DAPLLPGAEL (81 aa)) form a disordered region. Over residues 71 to 86 (EAVDVAPAEDDEEEDA) the composition is skewed to acidic residues. GTP contacts are provided by residues 283-290 (GVNGTGKT), 365-369 (DTAGR), and 429-432 (TKLD).

The protein belongs to the GTP-binding SRP family. FtsY subfamily. Part of the signal recognition particle protein translocation system, which is composed of SRP and FtsY. SRP is a ribonucleoprotein composed of Ffh and a 4.5S RNA molecule.

It is found in the cell inner membrane. The protein resides in the cytoplasm. It catalyses the reaction GTP + H2O = GDP + phosphate + H(+). In terms of biological role, involved in targeting and insertion of nascent membrane proteins into the cytoplasmic membrane. Acts as a receptor for the complex formed by the signal recognition particle (SRP) and the ribosome-nascent chain (RNC). Interaction with SRP-RNC leads to the transfer of the RNC complex to the Sec translocase for insertion into the membrane, the hydrolysis of GTP by both Ffh and FtsY, and the dissociation of the SRP-FtsY complex into the individual components. The polypeptide is Signal recognition particle receptor FtsY (Agrobacterium fabrum (strain C58 / ATCC 33970) (Agrobacterium tumefaciens (strain C58))).